We begin with the raw amino-acid sequence, 86 residues long: Putative regulatory protein Desal_2819 (86 aa).

The protein belongs to the RemA family.

The sequence is that of Putative regulatory protein Desal_2819 from Maridesulfovibrio salexigens (strain ATCC 14822 / DSM 2638 / NCIMB 8403 / VKM B-1763) (Desulfovibrio salexigens).